We begin with the raw amino-acid sequence, 117 residues long: MNVSFLNHSGLEEVGGDARATLGNRSHGLGTWLDCCPGGAPLTASDGVPAGLAPDERSLWVSRVAQIAVLCVLSLTVVFGVFFLGCNLLIKSESMINFLMQERRPSKDVGAAILGLY.

The helical transmembrane segment at 64–84 threads the bilayer; it reads VAQIAVLCVLSLTVVFGVFFL. Residue serine 106 is modified to Phosphoserine.

This sequence belongs to the reprimo family.

It localises to the membrane. The sequence is that of Reprimo-like protein (Rprml) from Mus musculus (Mouse).